The sequence spans 657 residues: Glycogen debranching enzyme (657 aa).

Catalysis depends on Asp336, which acts as the Nucleophile. The active-site Proton donor is Glu371. The segment covering 458–467 (NEANGEENRD) has biased composition (basic and acidic residues). The interval 458–479 (NEANGEENRDGTNNNYSNNHGK) is disordered.

This sequence belongs to the glycosyl hydrolase 13 family.

The catalysed reaction is Hydrolysis of (1-&gt;6)-alpha-D-glucosidic linkages to branches with degrees of polymerization of three or four glucose residues in limit dextrin.. The protein operates within glycan degradation; glycogen degradation. Functionally, removes maltotriose and maltotetraose chains that are attached by 1,6-alpha-linkage to the limit dextrin main chain, generating a debranched limit dextrin. This chain is Glycogen debranching enzyme, found in Escherichia coli (strain 55989 / EAEC).